The following is a 392-amino-acid chain: Probable glycerol-3-phosphate dehydrogenase 2 (392 aa).

NAD(+) contacts are provided by residues 42–47 (GSGNWG), F130, K153, and A196. Residue K153 coordinates substrate. K248 serves as the catalytic Proton acceptor. The NAD(+) site is built by R312 and Q341. Position 312–313 (312–313 (RN)) interacts with substrate.

The protein belongs to the NAD-dependent glycerol-3-phosphate dehydrogenase family. As to quaternary structure, homodimer.

It localises to the cytoplasm. The catalysed reaction is sn-glycerol 3-phosphate + NAD(+) = dihydroxyacetone phosphate + NADH + H(+). The protein is Probable glycerol-3-phosphate dehydrogenase 2 (gpdh-2) of Caenorhabditis elegans.